We begin with the raw amino-acid sequence, 324 residues long: Pseudouridylate synthase RPUSD4, mitochondrial (324 aa).

Residues 1-11 constitute a mitochondrion transit peptide; the sequence is MAAAGGGATRG. Residue D105 is part of the active site.

It belongs to the pseudouridine synthase RluA family.

The protein localises to the mitochondrion matrix. The protein resides in the nucleus. It localises to the cytoplasm. It catalyses the reaction uridine in 5S rRNA = pseudouridine in 5S rRNA. The enzyme catalyses a uridine in tRNA = a pseudouridine in tRNA. The catalysed reaction is a uridine in mRNA = a pseudouridine in mRNA. Catalyzes uridine to pseudouridine isomerization (pseudouridylation) of different mitochondrial RNA substrates. Acts on position 1397 in 16S mitochondrial ribosomal RNA (16S mt-rRNA). This modification is required for the assembly of 16S mt-rRNA into a functional mitochondrial ribosome. Acts on position 39 in mitochondrial tRNA(Phe). Also catalyzes pseudouridylation of mRNAs in nucleus: acts as a regulator of pre-mRNA splicing by mediating pseudouridylation of pre-mRNAs at locations associated with alternatively spliced regions. Pseudouridylation of pre-mRNAs near splice sites directly regulates mRNA splicing and mRNA 3'-end processing. This chain is Pseudouridylate synthase RPUSD4, mitochondrial, found in Xenopus tropicalis (Western clawed frog).